We begin with the raw amino-acid sequence, 136 residues long: uncharacterized protein (136 aa).

2 disordered regions span residues 58–82 and 112–136; these read TSDD…TTQT and NNPK…VVTQ.

This is an uncharacterized protein from Dictyostelium discoideum (Social amoeba).